The chain runs to 101 residues: Small ribosomal subunit protein bS6 (101 aa).

It belongs to the bacterial ribosomal protein bS6 family.

Its function is as follows. Binds together with bS18 to 16S ribosomal RNA. This chain is Small ribosomal subunit protein bS6, found in Staphylococcus saprophyticus subsp. saprophyticus (strain ATCC 15305 / DSM 20229 / NCIMB 8711 / NCTC 7292 / S-41).